Reading from the N-terminus, the 381-residue chain is Sterol 24-C-methyltransferase ERG6A (381 aa).

Belongs to the class I-like SAM-binding methyltransferase superfamily. Erg6/SMT family.

The catalysed reaction is lanosterol + S-adenosyl-L-methionine = eburicol + S-adenosyl-L-homocysteine + H(+). Its pathway is steroid metabolism; ergosterol biosynthesis. Its function is as follows. Sterol 24-C-methyltransferase; part of the third module of ergosterol biosynthesis pathway that includes the late steps of the pathway. ERG6A and ERG6B methylate lanosterol at C-24 to produce eburicol. The third module or late pathway involves the ergosterol synthesis itself through consecutive reactions that mainly occur in the endoplasmic reticulum (ER) membrane. Firstly, the squalene synthase ERG9 catalyzes the condensation of 2 farnesyl pyrophosphate moieties to form squalene, which is the precursor of all steroids. Squalene synthase is crucial for balancing the incorporation of farnesyl diphosphate (FPP) into sterol and nonsterol isoprene synthesis. Secondly, squalene is converted into lanosterol by the consecutive action of the squalene epoxidase ERG1 and the lanosterol synthase ERG7. Then, the delta(24)-sterol C-methyltransferase ERG6 methylates lanosterol at C-24 to produce eburicol. Eburicol is the substrate of the sterol 14-alpha demethylase encoded by CYP51A, CYP51B and CYP51C, to yield 4,4,24-trimethyl ergosta-8,14,24(28)-trienol. CYP51B encodes the enzyme primarily responsible for sterol 14-alpha-demethylation, and plays an essential role in ascospore formation. CYP51A encodes an additional sterol 14-alpha-demethylase, induced on ergosterol depletion and responsible for the intrinsic variation in azole sensitivity. The third CYP51 isoform, CYP51C, does not encode a sterol 14-alpha-demethylase, but is required for full virulence on host wheat ears. The C-14 reductase ERG24 then reduces the C14=C15 double bond which leads to 4,4-dimethylfecosterol. A sequence of further demethylations at C-4, involving the C-4 demethylation complex containing the C-4 methylsterol oxidases ERG25, the sterol-4-alpha-carboxylate 3-dehydrogenase ERG26 and the 3-keto-steroid reductase ERG27, leads to the production of fecosterol via 4-methylfecosterol. ERG28 has a role as a scaffold to help anchor ERG25, ERG26 and ERG27 to the endoplasmic reticulum. The C-8 sterol isomerase ERG2 then catalyzes the reaction which results in unsaturation at C-7 in the B ring of sterols and thus converts fecosterol to episterol. The sterol-C5-desaturases ERG3A and ERG3BB then catalyze the introduction of a C-5 double bond in the B ring to produce 5-dehydroepisterol. The C-22 sterol desaturases ERG5A and ERG5B further convert 5-dehydroepisterol into ergosta-5,7,22,24(28)-tetraen-3beta-ol by forming the C-22(23) double bond in the sterol side chain. Finally, ergosta-5,7,22,24(28)-tetraen-3beta-ol is substrate of the C-24(28) sterol reductase ERG4 to produce ergosterol. The protein is Sterol 24-C-methyltransferase ERG6A (FG02783.1) of Gibberella zeae (strain ATCC MYA-4620 / CBS 123657 / FGSC 9075 / NRRL 31084 / PH-1) (Wheat head blight fungus).